Consider the following 344-residue polypeptide: Fructose-1,6-bisphosphatase, cytosolic (344 aa).

Residues Glu-71, Glu-100, Asp-121, Leu-123, and Asp-124 each contribute to the Mg(2+) site. Substrate is bound by residues 124 to 127 (DGSS), Asn-215, Tyr-247, Tyr-267, and Lys-277. Glu-283 contributes to the Mg(2+) binding site.

This sequence belongs to the FBPase class 1 family. Mg(2+) serves as cofactor.

The protein localises to the cytoplasm. It catalyses the reaction beta-D-fructose 1,6-bisphosphate + H2O = beta-D-fructose 6-phosphate + phosphate. The polypeptide is Fructose-1,6-bisphosphatase, cytosolic (Oryza coarctata (Wild rice)).